The sequence spans 362 residues: Snurportin-1 (362 aa).

An N-acetylmethionine modification is found at M1. Disordered stretches follow at residues 1–40 and 69–90; these read MEELSQALAGSFSVSQDLNSTAAPHPRLSQYKSKYSSLEQ and DWTGMESEEEEEKKDDEEMDVD. The segment at 1 to 65 is necessary for interaction with KPNB1 and m3G-cap U1 and U5 snRNP import receptor activity; the sequence is MEELSQALAG…LDYVNHARRL (65 aa). The interval 1–160 is necessary for interaction with XPO1; the sequence is MEELSQALAG…NTFPSLLPGG (160 aa). One can recognise an IBB domain in the interval 11-73; that stretch reads SFSVSQDLNS…RLAEDDWTGM (63 aa). Positions 12 to 22 are enriched in polar residues; it reads FSVSQDLNSTA. Residues 69-89 are compositionally biased toward acidic residues; it reads DWTGMESEEEEEKKDDEEMDV. Phosphoserine is present on S75. The interaction with m3G-cap structure stretch occupies residues 128–130; the sequence is GKR. The necessary for binding to the m3G-cap structure stretch occupies residues 210 to 330; sequence LHSKLPEEEG…GIMGKLTPRA (121 aa). The interval 319 to 362 is disordered; it reads KEGIMGKLTPRASENGHYELEHLSTPKLKSPPQRPNHPESLMEN. Over residues 332 to 342 the composition is skewed to basic and acidic residues; the sequence is ENGHYELEHLS.

The protein belongs to the snurportin family. In terms of assembly, component of an import snRNP complex composed of KPNB1, SNUPN, SMN1 and ZNF259. Component of a nuclear export receptor complex composed of KPNB1, Ran, SNUPN and XPO1. Found in a trimeric export complex with SNUPN, Ran and XPO1. Interacts (via IBB domain) with KPNB1; the interaction is direct. Interacts with DDX20, IPO7, SMN1, SNRPB and XPO1. Interacts directly with XPO1. Its interaction with XPO1 and binding to m3G-cap U snRNPs appears to be mutually exclusive. Can form homomers.

It is found in the nucleus. The protein resides in the cytoplasm. In terms of biological role, functions as an U snRNP-specific nuclear import adapter. Involved in the trimethylguanosine (m3G)-cap-dependent nuclear import of U snRNPs. Binds specifically to the terminal m3G-cap U snRNAs. The polypeptide is Snurportin-1 (SNUPN) (Bos taurus (Bovine)).